We begin with the raw amino-acid sequence, 620 residues long: MTTTDTAPQTQPFQAEVAELLNLMVHSVYSETEIFLRELISNGSDALDKLRYEAISKPDLMEAGGTPKIQIVPKKAPDTLSVIDNGIGMDRQELIDNLGTIAKSGTKSFLTKLTEAKDGSNLIGQFGVGFYAAFMVADRIVVTSRRAGSTEAWTWTSSGGAGFEIAPASAEEAERIVRGTEIVLHLKPEAAKYLEAYQIERIVSAYSDNIQFPIELVPEEGEARQINSASALWQRSKSELAAEDYKQAYKSIANAFDDPAMTLHYRAEGRYSYAVMLFAPSTKPFDLFEPQRKGHVKLYVRRVFITDDADLLPAYLRFIRGVIDSEDLPLNLSREMLQNNPQLVQIRKAVTGKVIGELESLGEKDPENFAKIWDAFGPVIKEGIWEDYERREKLLALSRFTTTKGDNRTLKNYVEDLRDNQTEIYYLVGDSLERLKSNPKLESAAARGIEVLLLTDPVDAFWTSAPLDFGGKPLKSLSQGDVNFDLIPTTDEAKDEQPKPETDEALVIATIKDALGERVSDVRASQRLTASASCLIAGGQGPDRALERMLAQQNRGGASKPILEINLRHPLVAAIGRPGNADAADLSLLLLEQAQILDGELPEDPAGFAGRINRLVLRAL.

The a; substrate-binding stretch occupies residues 1-334 (MTTTDTAPQT…SEDLPLNLSR (334 aa)). Residues 335 to 548 (EMLQNNPQLV…GQGPDRALER (214 aa)) form a b region. The interval 549 to 620 (MLAQQNRGGA…RINRLVLRAL (72 aa)) is c.

Belongs to the heat shock protein 90 family. In terms of assembly, homodimer.

It is found in the cytoplasm. Molecular chaperone. Has ATPase activity. The sequence is that of Chaperone protein HtpG from Rhodopseudomonas palustris (strain BisA53).